The primary structure comprises 134 residues: Thioredoxin H2-2 (134 aa).

The disordered stretch occupies residues 1–20 (MGSFFSTMFTPPPAADDGGD). Residues 3 to 130 (SFFSTMFTPP…LERKVNMFIS (128 aa)) form the Thioredoxin domain. Active-site nucleophile residues include Cys56 and Cys59. A disulfide bridge connects residues Cys56 and Cys59.

The protein belongs to the thioredoxin family. Plant H-type subfamily.

The protein resides in the cytoplasm. In terms of biological role, probable thiol-disulfide oxidoreductase that may be involved in the redox regulation of a number of cytosolic enzymes. This Oryza sativa subsp. japonica (Rice) protein is Thioredoxin H2-2.